The primary structure comprises 91 residues: Mercuric transport protein periplasmic component (91 aa).

The N-terminal stretch at 1 to 19 is a signal peptide; sequence MKKLLSALALAAVVAPVWA. Positions 22 to 88 constitute an HMA domain; that stretch reads QTVTLSVPGM…ATEDAGYPSS (67 aa). The Hg(2+) site is built by cysteine 33 and cysteine 36.

Belongs to the MerP family. In terms of assembly, monomer.

It is found in the periplasm. Involved in mercury resistance. Acts as a mercury scavenger that specifically binds to a mercuric ion in the periplasm and probably passes it to the cytoplasmic mercuric reductase MerA via the mercuric transport protein MerT. This Pseudomonas fluorescens protein is Mercuric transport protein periplasmic component.